The chain runs to 89 residues: MANIKSAKKRAKQTVVRNARNVAQRSMLRTAVKKVIKALDANDAAGAQAAFAVAQPILDRFSARGLIHKNKAARHKSRLNDRIKALAAA.

Belongs to the bacterial ribosomal protein bS20 family.

Functionally, binds directly to 16S ribosomal RNA. The protein is Small ribosomal subunit protein bS20 of Stenotrophomonas maltophilia (strain R551-3).